Here is a 130-residue protein sequence, read N- to C-terminus: Small ribosomal subunit protein uS8 (130 aa).

It belongs to the universal ribosomal protein uS8 family. In terms of assembly, part of the 30S ribosomal subunit. Contacts proteins S5 and S12.

Functionally, one of the primary rRNA binding proteins, it binds directly to 16S rRNA central domain where it helps coordinate assembly of the platform of the 30S subunit. This chain is Small ribosomal subunit protein uS8, found in Stutzerimonas stutzeri (strain A1501) (Pseudomonas stutzeri).